The sequence spans 487 residues: UDP-N-acetylmuramate--L-alanine ligase (487 aa).

122–128 (GTHGKTS) is an ATP binding site.

The protein belongs to the MurCDEF family.

The protein resides in the cytoplasm. It catalyses the reaction UDP-N-acetyl-alpha-D-muramate + L-alanine + ATP = UDP-N-acetyl-alpha-D-muramoyl-L-alanine + ADP + phosphate + H(+). The protein operates within cell wall biogenesis; peptidoglycan biosynthesis. Functionally, cell wall formation. The chain is UDP-N-acetylmuramate--L-alanine ligase from Corynebacterium urealyticum (strain ATCC 43042 / DSM 7109).